The chain runs to 255 residues: SKA complex subunit 1 (255 aa).

A2 is modified (N-acetylalanine). Positions I49–V91 form a coiled coil. The flexiple loop that anchors MAPRE1 stretch occupies residues P92 to R132. The SXLP motif; mediates interaction with MAPRE1, targeting to microtubule plus ends, stabilization on kinetochores and is required for proper chromosome alignment to the metaphase plate signature appears at S93–P96. Residues K106 to Q131 are disordered. A compositionally biased stretch (basic and acidic residues) spans E114–Q131. The tract at residues R132–T255 is binds microtubules and protein phosphatase PP1 subunit PPP1CA. Phosphothreonine; by AURKB is present on T157. S242 carries the post-translational modification Phosphoserine; by AURKB.

Belongs to the SKA1 family. In terms of assembly, component of the SKA complex, composed of SKA1, SKA2 and SKA3. The SKA complex is a homodimer organized around a central W-shaped coiled-coil structure, formed by the interacting domains of SKA1, SKA2, and SKA3, each end of the 'W' is extended further by the C-terminal microtubule-binding domains of SKA1 and SKA3; the complex forms extended structures on microtubules. Interacts (via SXLP motif) with MAPRE1 (via C-terminus); the interaction is direct and stabilizes the kinetochore-microtubule attachment of the SKA1 complex. Interacts (via C-terminus) with protein phosphatase PP1 subunit PPP1CA; the interaction is direct and required for recruitment of PPP1CA to the kinetochore. Interacts with the NDC80 complex; the interaction is required to establish kinetochore-microtubule end-on attachments. Phosphorylated by AURKB at Thr-157 and Ser-242 which negatively regulates the association of the SKA complex with kinetochores to allow correction of aberrant kinetochore-microtubule interactions and promote mitotic sister chromatid biorientation.

It localises to the cytoplasm. It is found in the cytoskeleton. The protein localises to the spindle. The protein resides in the chromosome. Its subcellular location is the centromere. It localises to the kinetochore. It is found in the microtubule organizing center. The protein localises to the centrosome. In terms of biological role, component of the SKA complex, a microtubule plus end-binding complex of the outer kinetochore that stabilizes spindle microtubule-kinetochore attachments, promotes alignment of chromosomes at the mitotic spindle equator (chromosome congression) and assists suppression of the spindle assembly checkpoint. Kinetochores, consisting of a centromere-associated inner segment and a microtubule-contacting outer segment, play a crucial role in chromosome segregation by mediating the physical connection between centromeric DNA and spindle microtubules. The outer kinetochore is made up of the ten-subunit KMN network complex, comprising the MIS12, NDC80 and KNL1 complexes, and auxiliary microtubule-associated components such as the SKA complex; together they connect the outer kinetochore with the inner kinetochore, bind microtubules, and mediate interactions with mitotic checkpoint proteins that delay anaphase until chromosomes are bioriented on the spindle. The SKA complex is loaded onto bioriented kinetochores and it facilitates chromosome congression by stabilizing microtubules together with MAPRE1, and end-on attachment of the NDC80 complex to depolymerizing spindle microtubules, thereby assisting the poleward-moving kinetochore in withstanding microtubule pulling forces. The complex associates with dynamic microtubule plus-ends and can track both depolymerizing and elongating microtubules. The complex recruits protein phosphatase 1 (PP1) to the kinetochore in prometaphase and metaphase, to oppose spindle assembly checkpoint signaling and promote the onset of anaphase. In the complex, it mediates interactions with microtubules. It also stimulates AURKB/Aurora B catalytic activity. During meiosis the SKA complex stabilizes the meiotic spindle and is required for its migration to the cortex. The sequence is that of SKA complex subunit 1 (SKA1) from Homo sapiens (Human).